A 486-amino-acid polypeptide reads, in one-letter code: Membrane-bound lytic murein transglycosylase F (486 aa).

Residues 1–21 (MTRIKLNYFVIGVVALLLALA) form the signal peptide. Positions 22-268 (LWPNIPWRNG…RLEEKYLGHV (247 aa)) are non-LT domain. Residues 269–486 (GSFDYVDTKT…VVGPGWSINN (218 aa)) are LT domain. Glu-313 is an active-site residue.

It in the N-terminal section; belongs to the bacterial solute-binding protein 3 family. The protein in the C-terminal section; belongs to the transglycosylase Slt family.

Its subcellular location is the cell outer membrane. It carries out the reaction Exolytic cleavage of the (1-&gt;4)-beta-glycosidic linkage between N-acetylmuramic acid (MurNAc) and N-acetylglucosamine (GlcNAc) residues in peptidoglycan, from either the reducing or the non-reducing ends of the peptidoglycan chains, with concomitant formation of a 1,6-anhydrobond in the MurNAc residue.. Its function is as follows. Murein-degrading enzyme that degrades murein glycan strands and insoluble, high-molecular weight murein sacculi, with the concomitant formation of a 1,6-anhydromuramoyl product. Lytic transglycosylases (LTs) play an integral role in the metabolism of the peptidoglycan (PG) sacculus. Their lytic action creates space within the PG sacculus to allow for its expansion as well as for the insertion of various structures such as secretion systems and flagella. This chain is Membrane-bound lytic murein transglycosylase F, found in Yersinia enterocolitica serotype O:8 / biotype 1B (strain NCTC 13174 / 8081).